Reading from the N-terminus, the 61-residue chain is Small ribosomal subunit protein uS14 (61 aa).

The Zn(2+) site is built by cysteine 24, cysteine 27, cysteine 40, and cysteine 43.

Belongs to the universal ribosomal protein uS14 family. Zinc-binding uS14 subfamily. Part of the 30S ribosomal subunit. Contacts proteins S3 and S10. Zn(2+) serves as cofactor.

Binds 16S rRNA, required for the assembly of 30S particles and may also be responsible for determining the conformation of the 16S rRNA at the A site. In Pelobacter propionicus (strain DSM 2379 / NBRC 103807 / OttBd1), this protein is Small ribosomal subunit protein uS14.